The primary structure comprises 286 residues: Beta-lactamase Ohio-1 (286 aa).

The first 21 residues, 1-21 (MRYFRLCIISLLATLPLRVHA), serve as a signal peptide directing secretion. Catalysis depends on serine 66, which acts as the Acyl-ester intermediate. A disulfide bridge links cysteine 73 with cysteine 119. Glutamate 164 (proton acceptor) is an active-site residue. 230 to 232 (KTG) provides a ligand contact to substrate.

The protein belongs to the class-A beta-lactamase family.

The enzyme catalyses a beta-lactam + H2O = a substituted beta-amino acid. In Enterobacter cloacae, this protein is Beta-lactamase Ohio-1.